Here is a 207-residue protein sequence, read N- to C-terminus: MDKDCEMKRTTLDSPLGKLELSGCEQGLHEIKLLGKGTSAADAVEVPAPAAVLGGPEPLMQCTAWLNAYFHQPEAIEEFPVPALHHPVFQQESFTRQVLWKLLKVVKFGEVISYQQLAALAGNPKAARAVGGAMRGNPVPILIPCHRVVCSSGAVGNYSGGLAVKEWLLAHEGHRLGKPGLGGSSGLAGAWLKGAGATSGSPPAGRN.

Cys5 provides a ligand contact to Zn(2+). Phosphoserine is present on Ser14. Zn(2+)-binding residues include Cys24, His29, and His85. DNA-binding residues include Thr95, Tyr114, Gln115, Asn123, and Arg128. Cys145 serves as the catalytic Nucleophile; methyl group acceptor. Residue Ser151 participates in DNA binding. Ser201 is modified (phosphoserine).

This sequence belongs to the MGMT family. Zn(2+) is required as a cofactor.

The protein localises to the nucleus. It catalyses the reaction a 6-O-methyl-2'-deoxyguanosine in DNA + L-cysteinyl-[protein] = S-methyl-L-cysteinyl-[protein] + a 2'-deoxyguanosine in DNA. It carries out the reaction a 4-O-methyl-thymidine in DNA + L-cysteinyl-[protein] = a thymidine in DNA + S-methyl-L-cysteinyl-[protein]. In terms of biological role, involved in the cellular defense against the biological effects of O6-methylguanine (O6-MeG) and O4-methylthymine (O4-MeT) in DNA. Repairs the methylated nucleobase in DNA by stoichiometrically transferring the methyl group to a cysteine residue in the enzyme. This is a suicide reaction: the enzyme is irreversibly inactivated. The sequence is that of Methylated-DNA--protein-cysteine methyltransferase (MGMT) from Homo sapiens (Human).